Consider the following 45-residue polypeptide: Small polypeptide DEVIL 23 (45 aa).

The segment at 13-44 (KSTLRCWDWCKEQRTRAYIIWRCLIFLLRWDD) is required for DVL/RTFL small polypeptide activity. Residues 22–39 (CKEQRTRAYIIWRCLIFL) traverse the membrane as a helical segment.

This sequence belongs to the DVL/RTFL small polypeptides family.

It localises to the cell membrane. Functionally, small polypeptide acting as a regulatory molecule which coordinates cellular responses required for differentiation, growth and development, probably by restricting polar cell proliferation in lateral organs and coordinating socket cell recruitment and differentiation at trichome sites. The protein is Small polypeptide DEVIL 23 of Arabidopsis thaliana (Mouse-ear cress).